The following is a 314-amino-acid chain: Lysophospholipase D GDPD1 (314 aa).

The Extracellular portion of the chain corresponds to 1–3; that stretch reads MSS. The chain crosses the membrane as a helical span at residues 4-24; the sequence is TAAFYLLSTLGGYLVTSFLLL. Residues 25-195 lie on the Cytoplasmic side of the membrane; sequence KYPTLLHQRK…VEKCYKENSD (171 aa). Residues 40 to 309 enclose the GP-PDE domain; sequence SKHISHRGGA…DYPTKLRDFL (270 aa). The a divalent metal cation site is built by Glu72, Asp74, and His87. A helical transmembrane segment spans residues 196–216; the sequence is IPILFSLQRVLLILGLFFTGL. The Extracellular segment spans residues 217–314; it reads LPFVPIREQF…LRDFLHNFSA (98 aa).

This sequence belongs to the glycerophosphoryl diester phosphodiesterase family. In terms of tissue distribution, widely expressed with high expression level in testis.

It localises to the cytoplasm. The protein localises to the membrane. It is found in the perinuclear region. Its subcellular location is the endoplasmic reticulum. It carries out the reaction a 1-O-alkyl-sn-glycero-3-phosphocholine + H2O = a 1-O-alkyl-sn-glycero-3-phosphate + choline + H(+). It catalyses the reaction 1-hexadecanoyl-sn-glycero-3-phosphocholine + H2O = 1-hexadecanoyl-sn-glycero-3-phosphate + choline + H(+). The enzyme catalyses N-hexadecanoyl-sn-glycero-3-phosphoethanolamine + H2O = N-hexadecanoylethanolamine + sn-glycerol 3-phosphate + H(+). The catalysed reaction is N-(5Z,8Z,11Z,14Z-eicosatetraenoyl)-1-(9Z-octadecenoyl)-sn-glycero-3-phosphoethanolamine + H2O = N-(5Z,8Z,11Z,14Z-eicosatetraenoyl)-ethanolamine + 1-(9Z-octadecenoyl)-sn-glycero-3-phosphate + H(+). It carries out the reaction N,1-di-(9Z-octadecenoyl)-sn-glycero-3-phosphoethanolamine + H2O = N-(9Z-octadecenoyl) ethanolamine + 1-(9Z-octadecenoyl)-sn-glycero-3-phosphate + H(+). It catalyses the reaction N-hexadecanoyl-1-(9Z-octadecenoyl)-sn-glycero-3-phosphoethanolamine + H2O = N-hexadecanoylethanolamine + 1-(9Z-octadecenoyl)-sn-glycero-3-phosphate + H(+). The enzyme catalyses 1-O-(1Z-octadecenyl)-sn-glycero-3-phospho-N-hexadecanoyl-ethanolamine + H2O = 1-O-(1Z-octadecenyl)-sn-glycero-3-phosphate + N-hexadecanoylethanolamine + H(+). The catalysed reaction is 1-hexadecanoyl-sn-glycero-3-phosphoethanolamine + H2O = 1-hexadecanoyl-sn-glycero-3-phosphate + ethanolamine + H(+). It carries out the reaction 1-O-hexadecyl-sn-glycero-3-phosphocholine + H2O = 1-O-hexadecyl-sn-glycero-3-phosphate + choline + H(+). It catalyses the reaction 1-(9Z-octadecenoyl)-sn-glycero-3-phosphocholine + H2O = 1-(9Z-octadecenoyl)-sn-glycero-3-phosphate + choline + H(+). The enzyme catalyses N,1-dihexadecanoyl-sn-glycero-3-phosphoethanolamine + H2O = N-hexadecanoylethanolamine + 1-hexadecanoyl-sn-glycero-3-phosphate + H(+). The catalysed reaction is 1-O-(1Z-octadecenyl)-sn-glycero-3-phospho-(N-5Z,8Z,11Z,14Z-eicosatetraenoyl)-ethanolamine + H2O = 1-O-(1Z-octadecenyl)-sn-glycero-3-phosphate + N-(5Z,8Z,11Z,14Z-eicosatetraenoyl)-ethanolamine + H(+). It carries out the reaction 1-O-(1Z-octadecenyl)-sn-glycero-3-phospho-(N-9Z-octadecenoyl)-ethanolamine + H2O = 1-O-(1Z-octadecenyl)-sn-glycero-3-phosphate + N-(9Z-octadecenoyl) ethanolamine + H(+). Lysophospholipase D activity is increased by magnesium and manganese and inhibited by calcium in a concentration dependent manner. Loss of lysophospholipase D activity by addition of EDTA. Functionally, hydrolyzes lysoglycerophospholipids to produce lysophosphatidic acid (LPA) and the corresponding amines. Shows a preference for 1-O-alkyl-sn-glycero-3-phosphocholine (lyso-PAF), lysophosphatidylethanolamine (lyso-PE) and lysophosphatidylcholine (lyso-PC). May be involved in bioactive N-acylethanolamine biosynthesis from both N-acyl-lysoplasmenylethanolamin (N-acyl-lysoPlsEt) and N-acyl-lysophosphatidylethanolamin (N-acyl-lysoPE). In addition, hydrolyzes glycerophospho-N-acylethanolamine to N-acylethanolamine. Does not display glycerophosphodiester phosphodiesterase activity, since it cannot hydrolyze either glycerophosphoinositol or glycerophosphocholine. The polypeptide is Lysophospholipase D GDPD1 (Homo sapiens (Human)).